We begin with the raw amino-acid sequence, 3432 residues long: Genome polyprotein (3432 aa).

Positions 2–15 (TKKPGGPGKNRAIN) are interaction with host EXOC1. The Cytoplasmic segment spans residues 2 to 109 (TKKPGGPGKN…KKQNKRGGNE (108 aa)). Residues 37 to 72 (LLDGRGPVRFVLALITFFKFTALAPTKALLGRWRAV) form a hydrophobic; homodimerization of capsid protein C region. A propeptide spans 106 to 127 (GGNESSIMWLASLAIVIACAGA) (ER anchor for the capsid protein C, removed in mature form by serine protease NS3). The chain crosses the membrane as a helical span at residues 110 to 130 (SSIMWLASLAIVIACAGAMKL). The Extracellular segment spans residues 131 to 253 (SNFQGKLLMT…ATRYLMKTEN (123 aa)). N-linked (GlcNAc...) asparagine; by host glycosylation occurs at asparagine 142. A helical membrane pass occupies residues 254-274 (WIIRNPGYAFLAAALGWMLGS). The Cytoplasmic portion of the chain corresponds to 275–279 (NSGQR). Residues 280–294 (VVFTILLLLVAPAYS) form a helical membrane-spanning segment. Topologically, residues 295–746 (FNCLGMGNRD…QVFGGAFRTL (452 aa)) are extracellular. Disulfide bonds link cysteine 297/cysteine 324, cysteine 354/cysteine 410, cysteine 354/cysteine 415, cysteine 368/cysteine 399, cysteine 386/cysteine 410, and cysteine 386/cysteine 415. The fusion peptide stretch occupies residues 392 to 405 (DRGWGNGCGLFGKG). Residue asparagine 448 is glycosylated (N-linked (GlcNAc...) asparagine; by host). Cystine bridges form between cysteine 484–cysteine 581 and cysteine 598–cysteine 629. Residues 747–767 (FGGMSWITQGLMGALLLWMGV) traverse the membrane as a helical segment. Over 768–773 (NARDRS) the chain is Cytoplasmic. The helical transmembrane segment at 774-794 (IALAFLATGGVLVFLATNVHA) threads the bilayer. Residues 795-1219 (DTGCAIDITR…AFAEANSGGD (425 aa)) lie on the Extracellular side of the membrane. Disulfide bonds link cysteine 798/cysteine 809, cysteine 849/cysteine 937, cysteine 973/cysteine 1017, cysteine 1074/cysteine 1123, cysteine 1085/cysteine 1106, and cysteine 1107/cysteine 1110. Asparagine 924 and asparagine 1001 each carry an N-linked (GlcNAc...) asparagine; by host glycan. A helical transmembrane segment spans residues 1220-1240 (VLHLALIAVFKIQPAFLVMNM). The Cytoplasmic segment spans residues 1241–1250 (LSARWTNQEN). Residues 1251 to 1271 (MVLVLGAAFFQLASVDLQIGV) traverse the membrane as a helical segment. Histidine 1272 is a topological domain (lumenal). The helical transmembrane segment at 1273 to 1293 (GILNAAAIAWMIVRAITFPTT) threads the bilayer. Over 1294–1309 (STVAMPVLALLTPGMR) the chain is Cytoplasmic. The chain crosses the membrane as a helical span at residues 1310–1330 (ALYLDTYRIILLVIGICSLLQ). At 1331–1341 (ERRKTMAKKKG) the chain is on the lumenal side. The chain crosses the membrane as a helical span at residues 1342 to 1362 (AVLLGLALTSTGWFSPTTIAA). Topologically, residues 1363-1374 (GLMVCNPNKKRG) are cytoplasmic. The chain crosses the membrane as a helical span at residues 1375–1395 (WPATEFLSAVGLMFAIVGGLA). Residues 1396–1398 (ELD) lie on the Lumenal side of the membrane. A helical membrane pass occupies residues 1399–1419 (IESMSIPFMLAGLMAVSYVIS). Residues 1420 to 1476 (GKATDMWLDRAADISWEMEAAITGSSRRLDVKLDDDGDFHLIDDPGVPWKVWLLRMS) lie on the Cytoplasmic side of the membrane. The tract at residues 1427 to 1466 (LDRAADISWEMEAAITGSSRRLDVKLDDDGDFHLIDDPGV) is interacts with and activates NS3 protease. Residues 1477 to 1497 (CIGLAALTPWAIVPAAFGYWL) constitute an intramembrane region (helical). Topologically, residues 1498 to 2173 (TLKTTKRGGV…RMALEELPDA (676 aa)) are cytoplasmic. The Peptidase S7 domain occupies 1505-1682 (GGVFWDTPSP…DRQEEPVPDA (178 aa)). Residues histidine 1555, aspartate 1579, and serine 1639 each act as charge relay system; for serine protease NS3 activity in the active site. One can recognise a Helicase ATP-binding domain in the interval 1685–1841 (PSMLKKRQMT…DSNAPIHDLQ (157 aa)). Residues 1689-1692 (KKRQ) are important for RNA-binding. 1698-1705 (LHPGSGKT) provides a ligand contact to ATP. Residues 1789-1792 (DEAH) carry the DEAH box motif. The region spanning 1852–2017 (GYEWITEYAG…GLVAQLYGPE (166 aa)) is the Helicase C-terminal domain. Lysine 1893 bears the N6-acetyllysine; by host mark. The disordered stretch occupies residues 1950–1969 (NPSPITSASAAQRRGRVGRN). A regulates the ATPase activity of NS3 helicase region spans residues 2168–2172 (EELPD). The chain crosses the membrane as a helical span at residues 2174 to 2194 (LETITLIVAITVMTGGFFLLM). Topologically, residues 2195 to 2199 (MQRKG) are lumenal. The helical intramembrane region spans 2200 to 2220 (IGKMGLGALVLTLATFFLWAA). Glutamate 2221 is a topological domain (lumenal). A helical membrane pass occupies residues 2222 to 2242 (VPGTKIAGTLLVALLLMVVLI). The Cytoplasmic segment spans residues 2243–2257 (PEPEKQRSQTDNQLA). The helical transmembrane segment at 2258–2278 (VFLICVLTVVGVVAANEYGML) threads the bilayer. The Lumenal portion of the chain corresponds to 2279 to 2311 (EKTKADLKSMFGGRTQAPGLTGLPSMALDLRPA). Residues 2312–2332 (TAWALYGGSTVVLTPLLKHLI) constitute an intramembrane region (helical). At 2333 to 2368 (TSEYVTTSLASISSQAGSLFVLPRGVPFTDLDLTVG) the chain is on the lumenal side. A helical membrane pass occupies residues 2369–2389 (LVFLGCWGQITLTTFLTAMVL). Residues 2390 to 2444 (VTLHYGYMLPGWQAEALRAAQRRTAAGIMKNAVVDGMVATDVPELERTTPLMQKK) lie on the Cytoplasmic side of the membrane. Residues 2445–2465 (VGQVLLIGVSVAAFLVNPNVT) traverse the membrane as a helical segment. Residues 2466–2469 (TVRE) are Lumenal-facing. The chain crosses the membrane as a helical span at residues 2470–2490 (AGVLVTAATLTLWDNGASAVW). The Cytoplasmic portion of the chain corresponds to 2491-3432 (NSTTATGLCH…DVLIQEDRVI (942 aa)). An mRNA cap 0-1 NS5-type MT domain is found at 2528–2793 (GRPGGRTLGE…DVNLGSGTRA (266 aa)). An S-adenosyl-L-methionine-binding site is contributed by serine 2583. At serine 2583 the chain carries Phosphoserine. Catalysis depends on lysine 2588, which acts as the For 2'-O-MTase activity. Positions 2613, 2614, 2631, 2632, 2658, and 2659 each coordinate S-adenosyl-L-methionine. The For 2'-O-MTase activity role is filled by aspartate 2673. Residue isoleucine 2674 coordinates S-adenosyl-L-methionine. Residues lysine 2709 and glutamate 2745 each act as for 2'-O-MTase activity in the active site. Tyrosine 2747 contacts S-adenosyl-L-methionine. Glutamate 2967, histidine 2971, cysteine 2976, and cysteine 2979 together coordinate Zn(2+). Residues 3057 to 3209 (GKMYADDTAG…KPLDDRFATA (153 aa)) enclose the RdRp catalytic domain. 3 residues coordinate Zn(2+): histidine 3244, cysteine 3260, and cysteine 3379.

This sequence in the N-terminal section; belongs to the class I-like SAM-binding methyltransferase superfamily. mRNA cap 0-1 NS5-type methyltransferase family. Homodimer. Interacts (via N-terminus) with host EXOC1 (via C-terminus); this interaction results in EXOC1 degradation through the proteasome degradation pathway. In terms of assembly, forms heterodimers with envelope protein E in the endoplasmic reticulum and Golgi. As to quaternary structure, homodimer; in the endoplasmic reticulum and Golgi. Interacts with protein prM. Interacts with non-structural protein 1. Interacts with host HSPA5. Homodimer; Homohexamer when secreted. Interacts with envelope protein E. NS1 interacts with NS4B. Interacts with host complement protein CFH; this interaction leads to the degradation of C3. In terms of assembly, interacts (via N-terminus) with serine protease NS3. As to quaternary structure, forms a heterodimer with serine protease NS3. May form homooligomers. Forms a heterodimer with NS2B. Interacts with non-structural protein 2A (via N-terminus). Interacts with NS4B. Interacts with unphosphorylated RNA-directed RNA polymerase NS5; this interaction stimulates RNA-directed RNA polymerase NS5 guanylyltransferase activity. Interacts with host ILF2. In terms of assembly, interacts with serine protease NS3. As to quaternary structure, homodimer. Interacts with host STAT2; this interaction inhibits the phosphorylation of the latter, and, when all viral proteins are present (polyprotein), targets STAT2 for degradation. Interacts with serine protease NS3. Mn(2+) serves as cofactor. Mg(2+) is required as a cofactor. In terms of processing, specific enzymatic cleavages in vivo yield mature proteins. Cleavages in the lumen of endoplasmic reticulum are performed by host signal peptidase, whereas cleavages in the cytoplasmic side are performed by serine protease NS3. Signal cleavage at the 2K-4B site requires a prior NS3 protease-mediated cleavage at the 4A-2K site. Post-translationally, cleaved in post-Golgi vesicles by a host furin, releasing the mature small envelope protein M, and peptide pr. This cleavage is incomplete as up to 30% of viral particles still carry uncleaved prM. N-glycosylated. In terms of processing, N-glycosylated. The excreted form is glycosylated and this is required for efficient secretion of the protein from infected cells. Post-translationally, acetylated by host KAT5. Acetylation modulates NS3 RNA-binding and unwinding activities and plays an important positive role for viral replication. Phosphorylated on serines residues. This phosphorylation may trigger NS5 nuclear localization.

Its subcellular location is the host endoplasmic reticulum membrane. The protein resides in the virion. It is found in the host nucleus. The protein localises to the host cytoplasm. It localises to the host perinuclear region. Its subcellular location is the secreted. The protein resides in the virion membrane. It is found in the host cell surface. It carries out the reaction Selective hydrolysis of -Xaa-Xaa-|-Yaa- bonds in which each of the Xaa can be either Arg or Lys and Yaa can be either Ser or Ala.. The catalysed reaction is a ribonucleoside 5'-triphosphate + H2O = a ribonucleoside 5'-diphosphate + phosphate + H(+). The enzyme catalyses RNA(n) + a ribonucleoside 5'-triphosphate = RNA(n+1) + diphosphate. It catalyses the reaction ATP + H2O = ADP + phosphate + H(+). It carries out the reaction a 5'-end (5'-triphosphoguanosine)-ribonucleoside in mRNA + S-adenosyl-L-methionine = a 5'-end (N(7)-methyl 5'-triphosphoguanosine)-ribonucleoside in mRNA + S-adenosyl-L-homocysteine. The catalysed reaction is a 5'-end (N(7)-methyl 5'-triphosphoguanosine)-ribonucleoside in mRNA + S-adenosyl-L-methionine = a 5'-end (N(7)-methyl 5'-triphosphoguanosine)-(2'-O-methyl-ribonucleoside) in mRNA + S-adenosyl-L-homocysteine + H(+). Functionally, plays a role in virus budding by binding to the cell membrane and gathering the viral RNA into a nucleocapsid that forms the core of a mature virus particle. During virus entry, may induce genome penetration into the host cytoplasm after hemifusion induced by the surface proteins. Can migrate to the cell nucleus where it modulates host functions. Overcomes the anti-viral effects of host EXOC1 by sequestering and degrading the latter through the proteasome degradation pathway. Its function is as follows. Inhibits RNA silencing by interfering with host Dicer. In terms of biological role, prevents premature fusion activity of envelope proteins in trans-Golgi by binding to envelope protein E at pH6.0. After virion release in extracellular space, gets dissociated from E dimers. Acts as a chaperone for envelope protein E during intracellular virion assembly by masking and inactivating envelope protein E fusion peptide. prM is the only viral peptide matured by host furin in the trans-Golgi network probably to avoid catastrophic activation of the viral fusion activity in acidic Golgi compartment prior to virion release. prM-E cleavage is inefficient, and many virions are only partially matured. These uncleaved prM would play a role in immune evasion. Functionally, may play a role in virus budding. Exerts cytotoxic effects by activating a mitochondrial apoptotic pathway through M ectodomain. May display a viroporin activity. Its function is as follows. Binds to host cell surface receptor and mediates fusion between viral and cellular membranes. Efficient virus attachment to cell is, at least in part, mediated by host HSPA5. Envelope protein is synthesized in the endoplasmic reticulum in the form of heterodimer with protein prM. They play a role in virion budding in the ER, and the newly formed immature particle is covered with 60 spikes composed of heterodimer between precursor prM and envelope protein E. The virion is transported to the Golgi apparatus where the low pH causes dissociation of PrM-E heterodimers and formation of E homodimers. prM-E cleavage is inefficient, and many virions are only partially matured. These uncleaved prM would play a role in immune evasion. In terms of biological role, involved in immune evasion, pathogenesis and viral replication. Once cleaved off the polyprotein, is targeted to three destinations: the viral replication cycle, the plasma membrane and the extracellular compartment. Essential for viral replication. Required for formation of the replication complex and recruitment of other non-structural proteins to the ER-derived membrane structures. Excreted as a hexameric lipoparticle that plays a role against host immune response. Antagonizing the complement function. Binds to the host macrophages and dendritic cells. Inhibits signal transduction originating from Toll-like receptor 3 (TLR3). Component of the viral RNA replication complex that functions in virion assembly and antagonizes the host alpha/beta interferon antiviral response. Functionally, required cofactor for the serine protease function of NS3. May have membrane-destabilizing activity and form viroporins. Its function is as follows. Displays three enzymatic activities: serine protease, NTPase and RNA helicase. NS3 serine protease, in association with NS2B, performs its autocleavage and cleaves the polyprotein at dibasic sites in the cytoplasm: C-prM, NS2A-NS2B, NS2B-NS3, NS3-NS4A, NS4A-2K and NS4B-NS5. NS3 RNA helicase binds RNA and unwinds dsRNA in the 3' to 5' direction. In terms of biological role, regulates the ATPase activity of the NS3 helicase activity. NS4A allows NS3 helicase to conserve energy during unwinding. Functions as a signal peptide for NS4B and is required for the interferon antagonism activity of the latter. Functionally, induces the formation of ER-derived membrane vesicles where the viral replication takes place. Inhibits interferon (IFN)-induced host STAT1 phosphorylation and nuclear translocation, thereby preventing the establishment of cellular antiviral state by blocking the IFN-alpha/beta pathway. Inhibits STAT2 translocation in the nucleus after IFN-alpha treatment. Its function is as follows. Replicates the viral (+) and (-) RNA genome. Performs the capping of genomes in the cytoplasm. NS5 methylates viral RNA cap at guanine N-7 and ribose 2'-O positions. Besides its role in RNA genome replication, also prevents the establishment of cellular antiviral state by blocking the interferon-alpha/beta (IFN-alpha/beta) signaling pathway. Inhibits host TYK2 and STAT2 phosphorylation, thereby preventing activation of JAK-STAT signaling pathway. The polypeptide is Genome polyprotein (Japanese encephalitis virus (strain M28) (JEV)).